The following is a 108-amino-acid chain: uncharacterized protein (108 aa).

A helical transmembrane segment spans residues 25–45 (VILKSFLLISSWVILVLLLVI).

The protein resides in the membrane. This is an uncharacterized protein from Saccharomyces cerevisiae (strain ATCC 204508 / S288c) (Baker's yeast).